The chain runs to 366 residues: Growth hormone secretagogue receptor type 1 (366 aa).

At 1-40 (MWNATLSEEPGYNLTLPDLGWDAPADNDSLTDELLPLFPA) the chain is on the extracellular side. N-linked (GlcNAc...) asparagine glycosylation is found at N3, N13, and N27. Residues 41-66 (PLLAGVTATCVALFVVGIAGNLLTML) form a helical membrane-spanning segment. Residues 67 to 72 (VVSRFR) lie on the Cytoplasmic side of the membrane. Residues 73–96 (ELRTTTNLYLSSMAFSDLLIFLCM) form a helical membrane-spanning segment. Over 97 to 117 (PLDLVRLWQYRPWNFGDLLCK) the chain is Extracellular. C116 and C198 are disulfide-bonded. Residues 118–139 (LFQFVSESCTYATVLTITALSV) traverse the membrane as a helical segment. The Cytoplasmic portion of the chain corresponds to 140–162 (ERYFAICFPLRAKVVVTKGRVKL). A helical transmembrane segment spans residues 163-183 (VILVIWAVAFCSAGPIFVLVG). Topologically, residues 184–211 (VEHENGTDPRDTNECRATEFAVRSGLLT) are extracellular. N188 carries N-linked (GlcNAc...) asparagine glycosylation. A helical transmembrane segment spans residues 212–235 (VMVWVSSVFFFLPVFCLTVLYSLI). Residues 236-263 (GRKLWRRKRGEAAVGASLRDQNHKQTVK) are Cytoplasmic-facing. Residues 264 to 285 (MLAVVVFAFILCWLPFHVGRYL) form a helical membrane-spanning segment. Over 286–302 (FSKSFEPGSLEIAQISQ) the chain is Extracellular. A helical transmembrane segment spans residues 303 to 326 (YCNLVSFVLFYLSAAINPILYNIM). The Cytoplasmic portion of the chain corresponds to 327–366 (SKKYRVAVFKLLGFEPFSQRKLSTLKDESSRAWTETSINT).

The protein belongs to the G-protein coupled receptor 1 family.

It localises to the cell membrane. In terms of biological role, receptor for ghrelin, coupled to G-alpha-11 proteins. Stimulates growth hormone secretion. Also binds other growth hormone releasing peptides (GHRP) (e.g. Met-enkephalin and GHRP-6) as well as non-peptide, low molecular weight secretagogues (e.g. L-692,429, MK-0677, adenosine). This chain is Growth hormone secretagogue receptor type 1 (GHSR), found in Mustela putorius furo (European domestic ferret).